The following is a 75-amino-acid chain: Salivary glue protein Sgs-8 (75 aa).

The signal sequence occupies residues 1–24; sequence MKLLVVAVIACIMLIGFADPASGC.

This Drosophila melanogaster (Fruit fly) protein is Salivary glue protein Sgs-8 (Sgs8).